The primary structure comprises 488 residues: Cobyric acid synthase (488 aa).

Residues 247 to 440 (LLRVIVPVLP…VHGVFDEPTA (194 aa)) form the GATase cobBQ-type domain. C328 serves as the catalytic Nucleophile. The active site involves H432.

This sequence belongs to the CobB/CobQ family. CobQ subfamily.

Its pathway is cofactor biosynthesis; adenosylcobalamin biosynthesis. In terms of biological role, catalyzes amidations at positions B, D, E, and G on adenosylcobyrinic A,C-diamide. NH(2) groups are provided by glutamine, and one molecule of ATP is hydrogenolyzed for each amidation. The polypeptide is Cobyric acid synthase (Cupriavidus pinatubonensis (strain JMP 134 / LMG 1197) (Cupriavidus necator (strain JMP 134))).